The chain runs to 47 residues: Antimicrobial peptide LCI (47 aa).

It localises to the secreted. Has antibacterial activity against X.oryzae pv oryzae and R.solanacearum, but not E.coli or P.carotovorum subsp carotovorum. May bind DNA or mRNA. This is Antimicrobial peptide LCI from Bacillus subtilis.